The following is a 419-amino-acid chain: L-rhamnose isomerase (419 aa).

3 residues coordinate Mn(2+): His262, Asp294, and Asp296.

It belongs to the rhamnose isomerase family. As to quaternary structure, homotetramer. Mn(2+) is required as a cofactor.

It localises to the cytoplasm. It carries out the reaction L-rhamnopyranose = L-rhamnulose. The protein operates within carbohydrate degradation; L-rhamnose degradation; glycerone phosphate from L-rhamnose: step 1/3. Functionally, catalyzes the interconversion of L-rhamnose and L-rhamnulose. This Escherichia coli O45:K1 (strain S88 / ExPEC) protein is L-rhamnose isomerase.